Reading from the N-terminus, the 237-residue chain is tRNA (guanine-N(1)-)-methyltransferase (237 aa).

S-adenosyl-L-methionine is bound by residues Gly-113 and 133–138 (VGDFIV).

The protein belongs to the RNA methyltransferase TrmD family. As to quaternary structure, homodimer.

The protein resides in the cytoplasm. It carries out the reaction guanosine(37) in tRNA + S-adenosyl-L-methionine = N(1)-methylguanosine(37) in tRNA + S-adenosyl-L-homocysteine + H(+). Its function is as follows. Specifically methylates guanosine-37 in various tRNAs. This Hydrogenovibrio crunogenus (strain DSM 25203 / XCL-2) (Thiomicrospira crunogena) protein is tRNA (guanine-N(1)-)-methyltransferase.